A 549-amino-acid chain; its full sequence is Probable protein kinase UbiB (549 aa).

The Protein kinase domain maps to 123–504; the sequence is DFDETALASA…QRNNTGFSRL (382 aa). ATP-binding positions include 129–137 and Lys-156; that span reads LASASIAQV. Asp-291 serves as the catalytic Proton acceptor. The helical transmembrane segment at 505 to 525 threads the bilayer; the sequence is MILGIAIAGTFWKFEMLPLWV.

It belongs to the ABC1 family. UbiB subfamily.

The protein localises to the cell inner membrane. The protein operates within cofactor biosynthesis; ubiquinone biosynthesis [regulation]. Functionally, is probably a protein kinase regulator of UbiI activity which is involved in aerobic coenzyme Q (ubiquinone) biosynthesis. In Glaesserella parasuis serovar 5 (strain SH0165) (Haemophilus parasuis), this protein is Probable protein kinase UbiB.